The primary structure comprises 258 residues: Isoprenyl transferase (258 aa).

The active site involves aspartate 38. Residue aspartate 38 participates in Mg(2+) binding. Residues 39–42 (GNGR), tryptophan 43, arginine 51, histidine 55, and 83–85 (STE) each bind substrate. The active-site Proton acceptor is asparagine 86. Residues tryptophan 87, arginine 89, arginine 206, and 212-214 (RIS) contribute to the substrate site. Glutamate 225 is a binding site for Mg(2+).

Belongs to the UPP synthase family. As to quaternary structure, homodimer. Mg(2+) serves as cofactor.

In terms of biological role, catalyzes the condensation of isopentenyl diphosphate (IPP) with allylic pyrophosphates generating different type of terpenoids. The polypeptide is Isoprenyl transferase (Bacillus thuringiensis subsp. konkukian (strain 97-27)).